Consider the following 124-residue polypeptide: Small ribosomal subunit protein uS12 (124 aa).

Position 89 is a 3-methylthioaspartic acid (Asp-89).

It belongs to the universal ribosomal protein uS12 family. Part of the 30S ribosomal subunit. Contacts proteins S8 and S17. May interact with IF1 in the 30S initiation complex.

With S4 and S5 plays an important role in translational accuracy. Its function is as follows. Interacts with and stabilizes bases of the 16S rRNA that are involved in tRNA selection in the A site and with the mRNA backbone. Located at the interface of the 30S and 50S subunits, it traverses the body of the 30S subunit contacting proteins on the other side and probably holding the rRNA structure together. The combined cluster of proteins S8, S12 and S17 appears to hold together the shoulder and platform of the 30S subunit. The protein is Small ribosomal subunit protein uS12 of Psychrobacter sp. (strain PRwf-1).